A 410-amino-acid polypeptide reads, in one-letter code: Cysteine desulfurase IscS (410 aa).

Pyridoxal 5'-phosphate contacts are provided by residues 80 to 81 (AT), asparagine 160, glutamine 188, and 208 to 210 (SGH). Lysine 211 carries the post-translational modification N6-(pyridoxal phosphate)lysine. Threonine 248 provides a ligand contact to pyridoxal 5'-phosphate. Cysteine 334 functions as the Cysteine persulfide intermediate in the catalytic mechanism. Cysteine 334 provides a ligand contact to [2Fe-2S] cluster.

It belongs to the class-V pyridoxal-phosphate-dependent aminotransferase family. NifS/IscS subfamily. Homodimer. Forms a heterotetramer with IscU, interacts with other sulfur acceptors. Pyridoxal 5'-phosphate is required as a cofactor.

The protein localises to the cytoplasm. It catalyses the reaction (sulfur carrier)-H + L-cysteine = (sulfur carrier)-SH + L-alanine. It participates in cofactor biosynthesis; iron-sulfur cluster biosynthesis. Master enzyme that delivers sulfur to a number of partners involved in Fe-S cluster assembly, tRNA modification or cofactor biosynthesis. Catalyzes the removal of elemental sulfur atoms from cysteine to produce alanine. Functions as a sulfur delivery protein for Fe-S cluster synthesis onto IscU, an Fe-S scaffold assembly protein, as well as other S acceptor proteins. This Rickettsia akari (strain Hartford) protein is Cysteine desulfurase IscS.